Here is a 1711-residue protein sequence, read N- to C-terminus: Receptor-type tyrosine-protein phosphatase V (1711 aa).

An N-terminal signal peptide occupies residues 1-17 (MRPLILLAALLWLQGFL). At 18–1074 (AEDDACSSLE…SEPRASISLA (1057 aa)) the chain is on the extracellular side. 10 Fibronectin type-III domains span residues 37–129 (PLLS…TAPT), 130–222 (VVRG…VPPD), 218–305 (PVPP…EWTY), 306–391 (PSYP…LAES), 393–470 (ALPR…ISGY), 475–569 (PPQS…APPT), 565–654 (PAPP…TGWT), 655–749 (PPSA…IPNE), 744–831 (PLIP…VLSV), and 832–926 (EPGP…SAEA). N42, N74, N89, N117, N174, N239, and N259 each carry an N-linked (GlcNAc...) asparagine glycan. The N-linked (GlcNAc...) asparagine glycan is linked to N431. N-linked (GlcNAc...) asparagine glycosylation is found at N570, N620, N649, N663, and N737. N-linked (GlcNAc...) asparagine glycosylation is found at N851, N882, N970, and N982. Residues 1075–1095 (IIPLTVMLGAVVGSIVIVCAV) traverse the membrane as a helical segment. Topologically, residues 1096-1711 (LCLLRWRCLK…PRAGKWPAPC (616 aa)) are cytoplasmic. 2 Tyrosine-protein phosphatase domains span residues 1150–1409 (FFQE…LLNK) and 1427–1696 (DFAQ…LNSA). Residues D1316, 1350 to 1356 (CSAGVGR), and Q1394 each bind substrate. The Phosphocysteine intermediate role is filled by C1350.

Belongs to the protein-tyrosine phosphatase family. Receptor class 3 subfamily. In terms of processing, the cytoplasmic domain contains potential phosphorylation sites. Bone and testis. In the latter, restricted to the basal portion of the seminiferous tubule.

The protein localises to the membrane. The enzyme catalyses O-phospho-L-tyrosyl-[protein] + H2O = L-tyrosyl-[protein] + phosphate. Functionally, protein tyrosine phosphatase that acts as a regulator of energy metabolism. Prevents decarboxylation of osteocalcin (Bglap) via an indirect mechanism, preventing the hormone activity of osteocalcin. Functions in signaling pathways during bone remodeling, as well as serve a broader role in cell interactions associated with differentiation in bone and testis. Associated with differentiation in bone and testis. This Rattus norvegicus (Rat) protein is Receptor-type tyrosine-protein phosphatase V (Ptprv).